A 319-amino-acid chain; its full sequence is Vomeronasal type-1 receptor 51 (319 aa).

Residues 1 to 31 (MNEILFFSPQPLFSHMMNENSRVHTHSNLRH) are Extracellular-facing. Residues 32–52 (IFFSEIGIGISGNSFLLLFHI) traverse the membrane as a helical segment. Over 53 to 65 (LKFIHGHRSRLSD) the chain is Cytoplasmic. The chain crosses the membrane as a helical span at residues 66–86 (LPIGLLSLIHLLMLLVMAFIA). Over 87–109 (TDIFISWRGWDDIICKFLVYLYR) the chain is Extracellular. Cysteine 101 and cysteine 188 form a disulfide bridge. A helical transmembrane segment spans residues 110-130 (VLRGLSLCTTSMLSVLQAIIL). Residues 131–150 (SPRSSCLAKFKRKSLHHISC) are Cytoplasmic-facing. The chain crosses the membrane as a helical span at residues 151 to 171 (AILFLSVLYMLIGSQLLVSII). Residues 172–203 (ATPNLTTNDFIYVTQSCSILPLSYVMQSMFST) lie on the Extracellular side of the membrane. Asparagine 175 carries an N-linked (GlcNAc...) asparagine glycan. A helical membrane pass occupies residues 204–224 (LLVIRDVFLISLMVLSTWYMV). Topologically, residues 225–254 (ALLCRHRKKTQHLQGISLSPKTSPKQRATQ) are cytoplasmic. The helical transmembrane segment at 255 to 275 (TLLMLMSFFVLMTIYDTIVSC) threads the bilayer. The Extracellular portion of the chain corresponds to 276 to 285 (SRTMFLNDPT). The helical transmembrane segment at 286–306 (SYNMQIFVVHIYATVSPFVFM) threads the bilayer. Residues 307–319 (STEKHIVNCLRSV) are Cytoplasmic-facing.

Belongs to the G-protein coupled receptor 1 family. Expressed in a subset of sensory neurons located in the apical layer of the vomeronasal organ.

It localises to the cell membrane. Functionally, putative pheromone receptor implicated in the regulation of social as well as reproductive behavior. This is Vomeronasal type-1 receptor 51 (Vmn1r51) from Mus musculus (Mouse).